Reading from the N-terminus, the 286-residue chain is 4-hydroxybenzoate octaprenyltransferase (286 aa).

The next 7 helical transmembrane spans lie at Gly21–Met40, Ile95–Val115, Phe142–Val162, Trp167–Val187, Gln210–Ala230, Leu235–Phe255, and Phe266–Ile286.

It belongs to the UbiA prenyltransferase family. Mg(2+) serves as cofactor.

Its subcellular location is the cell inner membrane. It catalyses the reaction all-trans-octaprenyl diphosphate + 4-hydroxybenzoate = 4-hydroxy-3-(all-trans-octaprenyl)benzoate + diphosphate. It functions in the pathway cofactor biosynthesis; ubiquinone biosynthesis. Its function is as follows. Catalyzes the prenylation of para-hydroxybenzoate (PHB) with an all-trans polyprenyl group. Mediates the second step in the final reaction sequence of ubiquinone-8 (UQ-8) biosynthesis, which is the condensation of the polyisoprenoid side chain with PHB, generating the first membrane-bound Q intermediate 3-octaprenyl-4-hydroxybenzoate. This is 4-hydroxybenzoate octaprenyltransferase from Shewanella baltica (strain OS155 / ATCC BAA-1091).